We begin with the raw amino-acid sequence, 319 residues long: Olfactory receptor 8U8 (319 aa).

Residues 1–28 (MAHINCTQATEFILVGLTDHQELKMPLF) lie on the Extracellular side of the membrane. Asparagine 5 carries an N-linked (GlcNAc...) asparagine glycan. Residues 29–49 (VLFLSIYLFTVVGNLGLILLI) form a helical membrane-spanning segment. Over 50-56 (RADTSLN) the chain is Cytoplasmic. The chain crosses the membrane as a helical span at residues 57–77 (TPMYFFLSNLAFVDFCYSSVI). Topologically, residues 78 to 97 (TPKMLGNFLYKQNVISFDAC) are extracellular. An intrachain disulfide couples cysteine 97 to cysteine 179. Residues 98–118 (ATQLGCFLTFMVSESLLLASM) traverse the membrane as a helical segment. At 119-122 (AYDR) the chain is on the cytoplasmic side. The chain crosses the membrane as a helical span at residues 123-143 (YVAICNPLLYMVVMTPGICIQ). Over 144 to 204 (LVAVPYSYSF…KQLWILACAG (61 aa)) the chain is Extracellular. Residues 205–225 (ITFICSVLIVFVSYMFIIFAI) traverse the membrane as a helical segment. Residues 226 to 239 (LRMSSAEGRRKAFS) lie on the Cytoplasmic side of the membrane. A helical membrane pass occupies residues 240–260 (TCSSHMLAVTIFYGTLIFMYL). Over 261-271 (QPSSSHSLDAD) the chain is Extracellular. The helical transmembrane segment at 272 to 292 (KMASVFYTVIIPMLNPLIYSL) threads the bilayer. Residues 293 to 319 (RNKDVKDALKKVIINRNHAFIFLKLRK) lie on the Cytoplasmic side of the membrane.

It belongs to the G-protein coupled receptor 1 family.

The protein localises to the cell membrane. Its function is as follows. Odorant receptor. The protein is Olfactory receptor 8U8 (OR8U8) of Homo sapiens (Human).